The sequence spans 249 residues: Putative TrmH family tRNA/rRNA methyltransferase (249 aa).

G196, I216, and L225 together coordinate S-adenosyl-L-methionine.

Belongs to the class IV-like SAM-binding methyltransferase superfamily. RNA methyltransferase TrmH family.

In Staphylococcus epidermidis (strain ATCC 35984 / DSM 28319 / BCRC 17069 / CCUG 31568 / BM 3577 / RP62A), this protein is Putative TrmH family tRNA/rRNA methyltransferase.